A 256-amino-acid polypeptide reads, in one-letter code: Thiazole synthase (256 aa).

Catalysis depends on Lys96, which acts as the Schiff-base intermediate with DXP. Residues Gly157, 184–185 (AG), and 206–207 (NT) each bind 1-deoxy-D-xylulose 5-phosphate.

Belongs to the ThiG family. In terms of assembly, homotetramer. Forms heterodimers with either ThiH or ThiS.

The protein localises to the cytoplasm. It carries out the reaction [ThiS sulfur-carrier protein]-C-terminal-Gly-aminoethanethioate + 2-iminoacetate + 1-deoxy-D-xylulose 5-phosphate = [ThiS sulfur-carrier protein]-C-terminal Gly-Gly + 2-[(2R,5Z)-2-carboxy-4-methylthiazol-5(2H)-ylidene]ethyl phosphate + 2 H2O + H(+). It participates in cofactor biosynthesis; thiamine diphosphate biosynthesis. Functionally, catalyzes the rearrangement of 1-deoxy-D-xylulose 5-phosphate (DXP) to produce the thiazole phosphate moiety of thiamine. Sulfur is provided by the thiocarboxylate moiety of the carrier protein ThiS. In vitro, sulfur can be provided by H(2)S. The polypeptide is Thiazole synthase (Brucella abortus (strain S19)).